We begin with the raw amino-acid sequence, 62 residues long: Large ribosomal subunit protein bL33 (62 aa).

Belongs to the bacterial ribosomal protein bL33 family.

The chain is Large ribosomal subunit protein bL33 from Porphyromonas gingivalis (strain ATCC 33277 / DSM 20709 / CIP 103683 / JCM 12257 / NCTC 11834 / 2561).